The primary structure comprises 216 residues: Adenylate kinase (216 aa).

Position 10 to 15 (10 to 15 (GAGKGT)) interacts with ATP. The segment at 30–59 (STGDIFRKNIKEGTELGKKAKEYMDQGLLV) is NMP. Residues threonine 31, arginine 36, 57–59 (LLV), 85–88 (GFPR), and glutamine 92 contribute to the AMP site. The segment at 126 to 163 (GRRICKSCGATYHVEFNPPKVEGVCDVCQGELYQRADD) is LID. An ATP-binding site is contributed by arginine 127. Zn(2+)-binding residues include cysteine 130 and cysteine 133. Residue 136 to 137 (TY) participates in ATP binding. 2 residues coordinate Zn(2+): cysteine 150 and cysteine 153. The AMP site is built by arginine 160 and arginine 171. An ATP-binding site is contributed by glutamine 199.

Belongs to the adenylate kinase family. In terms of assembly, monomer.

Its subcellular location is the cytoplasm. The enzyme catalyses AMP + ATP = 2 ADP. The protein operates within purine metabolism; AMP biosynthesis via salvage pathway; AMP from ADP: step 1/1. In terms of biological role, catalyzes the reversible transfer of the terminal phosphate group between ATP and AMP. Plays an important role in cellular energy homeostasis and in adenine nucleotide metabolism. This chain is Adenylate kinase, found in Clostridioides difficile (strain 630) (Peptoclostridium difficile).